The following is a 2253-amino-acid chain: MAASKMNPVGNLLSTVSSTVGSLLQNPSVEEKEMDSDRVAASTTTNAGNLVQASVAPTMPVKPDFKNTDDFLSMSYRSTTAPTNPTKMVHLAHGTWTTNQHRQALVASITLPQAFWPNQDFPAWGQSRYFAAVRCGFHIQVQLNVNIGSAGCLIAAYMPKTAHDHMNTYTFGSYTNLPHVLMNAATTSQADLYIPYVFNHNYARTDSDDLGGIYIWVWSALTVPSGSPTTVDVTIFGSLLDLDFQCPRPPGADTVIYTQGKRTVRKTKTSKFKWVRNKIDIAEGPGAMNIANVLSTTGGQTIALVGERAFYDPRTAGAAVRCKDLMEIARMPSVFLGESTEPDGRRGYFTWSHTISPVNWVFDDHIYLENMPNLRLFSSCYNYWRGSFVIKLTVYASTFNKGRLRMAFFPNREGAYTQDEAQNAIFVVCDIGLNNTFEMTIPYTWGNWMRPTRGNSLGHLRIDVLNRLTYNSSSPNAVNCILQIKMGDDAMFMVPTTSNLVWQGLHSWGSEMDLVDSLDNPDEIQDNEEIQTQNVEAAQGEEAATEVGLRATENDGSLSEQLNMSQPMFLNFKKHKVNIYAASHTKVDHIFGRAWAVGVFNTETAAIQKFDLHFPTSTHGALSRFFCFWTGELNIHILNVSTTNAFLKVAHTWFGTDSGIARTATLESNGTMIIPPNEQMTLCVPYYSEVPLRCVKGSDRNSAGLGSLFTQAVGRTISNRVQIFVSFRCPNFFFPLPAPREATSRSILERVDEANAEELEAVLEARTPDAPLRLKFNPEDPLKQLREAAKAYFNIMHSDEMDFAGGKFLNQCGDVETNPGPDIELVYKNRGFYKHYGVRFGGHIYHLNSQDILSTAITGKSDFIKEEDDGKWVHAMTAPLDYFTEKYINSMVGSKHIFSATSNCETIARDLFPGRKEITQSKALGIIGVILLSASLLSLLAVPWDYSSLQTVYNQSIEGDASGLTLLSQRCMTFFSNTMCETFNNDLVKFIIKILVRLLCYIVLYCHAPNMLTTMCLGTLLVLDITTCEILSANTKALFQALVDGDVKSLVWKIAENMQFAQSKDEQAEDMAATFNFASDMVNFVPMEQMRQEGWREFNDVSMSFRHVEWWLTMFKKVYNVLKSIFAPSIEQKAVDWIDRNQEYIADVLDHASNIIIKMKDPKEQRRASTISEYFEVLKQLKPIVSLCMKVAPSTKFSSQVFRIYSEMMRVNVRVPANTDLTRLEPIGIWVSSEPGQGKSFFTHMLSTCLLKSCNLEGIYTNPTGSEFMDGYIGQDIHIIDDAGQNREEKDLALLCQCISSVPFTVPMADLTEKGTFYTSKIVIATTNKFDFTSMVLTDPAALERRFPFHLRIRAVASYSRNNKLDVARSMAAMADGSCWEYSTDGGRAWKTLSMDELVKQITAVYTQRSDALMVWKRKLNTIRNEMSPGSSTGRIFEPLEETLCALERRFGQLADSLKDNYHKTADELIEAIEDMMAPSQSPFACFAESYRPTIKYTASDKVKSWVKNHMNRWKEFVMRNKGWFTLFSVLSSFLSILTLVYLHYKKEKKEEERQERAYNPQTAISKKGGKPKLSLVKTTNFVNEAPYMQDLEHCFAQTAYISSPETQDIIHCAALSEDTILVYGHSQFYFNRYEDLRLHFKGAIFPIEGGKISQVTVNGQPMDLILVKIDKLPITFKNYTKYYTTEVGKETLLIWNSEKGRLAMPVQCVAPAGPVETMEGTITHKTYSYKVASKKGMCGGLLVTRVHGTFKVLGMHIAGNGQVARAAAVHFISNGAAGFMDQGVVVAKEKLQKPIYLPSKTALNPSPLNGVVPVKMEPAVLSPHDTRLEVIMPSVVKTAAAKYRVNIFNPDFEIWERVVDELKSKFRTKLGIHKHVSFQKAVQGFSSLSSLDLSTSPGQKYVEKGMKKRDLLSTEPFWMHPQLEGDVKDILGAVYSGKKPHTFFAAHLKDELRKKEKIAQGKTRCIEACSIDYVIAYRVVMSSLYEAIYQTPAQELGLAVGMNPWTDWDPMINVLQPYNYGLDYSSYDGSLSEQLMRYGVEILAYCHEQPEAVMILHEPVINSQHLVMDEIWHVNGGMPSGAPCTTVLNSICNLLVCTYLAYEQSLDIEVLPIVYGDDVIFSVSSPLDAEYLVQSAAQNFGMEVTSSDKSGPPKLLKMDEIEFLKRTTKFFPGSTYKVGALSLDTMEQHIMWMKNLETFPEQLVSFENELVLHGKEIYDDYKNRFNPILNQWRVCMQDYEVALHRMLRYVFD.

Residues Cys627 and Cys694 are joined by a disulfide bond. The Cell attachment site motif lies at 750–752 (RVD). The region spanning 825 to 920 (LVYKNRGFYK…LFPGRKEITQ (96 aa)) is the LRAT domain. Residues His835 and His846 each act as for protein 2A H-NC in the active site. Cys904 (for protein 2A H-NC; Acyl-thioester intermediate) is an active-site residue. Residues 1002-1022 (IVLYCHAPNMLTTMCLGTLLV) form a helical membrane-spanning segment. The 162-residue stretch at 1205 to 1366 (YSEMMRVNVR…ASYSRNNKLD (162 aa)) folds into the SF3 helicase domain. At Tyr1559 the chain carries O-(5'-phospho-RNA)-tyrosine. Residues 1586–1775 (APYMQDLEHC…RAAAVHFISN (190 aa)) form the Peptidase C3 domain. Residues His1626, Asp1664, and Cys1739 each act as for protease 3C activity in the active site. The Acyl-thioester intermediate role is filled by Cys1970. Residues 2018–2132 (PYNYGLDYSS…SVSSPLDAEY (115 aa)) enclose the RdRp catalytic domain. Residues Asp2024 and Asp2118 each coordinate Mg(2+).

Belongs to the picornaviruses polyprotein family. As to quaternary structure, interacts with capsid protein VP1 and capsid protein VP3 to form heterotrimeric protomers. Five protomers subsequently associate to form pentamers which serve as building blocks for the capsid. In terms of assembly, interacts with capsid protein VP0, and capsid protein VP3 to form heterotrimeric protomers. Five protomers subsequently associate to form pentamers which serve as building blocks for the capsid. Interacts with capsid protein VP0 and capsid protein VP1 to form heterotrimeric protomers. Five protomers subsequently associate to form pentamers which serve as building blocks for the capsid. As to quaternary structure, homohexamer; forms a hexameric ring structure with 6-fold symmetry characteristic of AAA+ ATPases. In terms of assembly, homodimer. Interacts with host ACBD3. Interacts with RNA-directed RNA polymerase. As to quaternary structure, interacts with Viral protein genome-linked. It depends on Mg(2+) as a cofactor. Post-translationally, VPg is uridylylated by the polymerase and is covalently linked to the 5'-end of genomic RNA. This uridylylated form acts as a nucleotide-peptide primer for the polymerase. In terms of processing, specific enzymatic cleavages yield mature proteins. All cleavages are catalyzed by P3C.

The protein localises to the virion. Its subcellular location is the host cytoplasm. The protein resides in the host nucleus. It is found in the host nucleolus. It localises to the host cytoplasmic vesicle membrane. The protein localises to the host endoplasmic reticulum membrane. Its subcellular location is the host Golgi apparatus membrane. The enzyme catalyses RNA(n) + a ribonucleoside 5'-triphosphate = RNA(n+1) + diphosphate. It carries out the reaction a ribonucleoside 5'-triphosphate + H2O = a ribonucleoside 5'-diphosphate + phosphate + H(+). It catalyses the reaction Selective cleavage of Gln-|-Gly bond in the poliovirus polyprotein. In other picornavirus reactions Glu may be substituted for Gln, and Ser or Thr for Gly.. Forms an icosahedral capsid of pseudo T=3 symmetry together with capsid proteins VP1 and VP3. The capsid is 300 Angstroms in diameter, composed of 60 copies of each capsid protein and enclosing the viral positive strand RNA genome. The attachment to the host cell receptor induces virion internalization predominantly through clathrin-mediated endocytosis. Binds packaging signals present in the viral RNA. Its function is as follows. Forms an icosahedral capsid of pseudo T=3 symmetry together with capsid proteins VP0 and VP1. The capsid is 300 Angstroms in diameter, composed of 60 copies of each capsid protein and enclosing the viral positive strand RNA genome. The attachment to the host cell receptor induces virion internalization predominantly through clathrin-mediated endocytosis. Binds packaging signals present in the viral RNA. Functionally, forms an icosahedral capsid of pseudo T=3 symmetry together with capsid proteins VP0 and VP3. The capsid is 300 Angstroms in diameter, composed of 60 copies of each capsid protein and enclosing the viral positive strand RNA genome. The attachment to the host cell receptor induces virion internalization predominantly through clathrin-mediated endocytosis. Binds packaging signals present in the viral RNA. In terms of biological role, mediates self-processing of the polyprotein by a translational effect termed 'ribosome skipping'. Mechanistically, 2A1-mediated cleavage occurs between the C-terminal glycine and the proline of the downstream protein 2A2. Plays an essential role in the virus replication cycle by acting as a viroporin. Creates a pore in the host endoplasmic reticulum and as a consequence releases Ca2+ in the cytoplasm of infected cell. In turn, high levels of cytoplasmic calcium may trigger membrane trafficking and transport of viral ER-associated proteins to viroplasms, sites of viral genome replication. Its function is as follows. Induces and associates with structural rearrangements of intracellular membranes. Displays RNA-binding, nucleotide binding and NTPase activities. May play a role in virion morphogenesis and viral RNA encapsidation by interacting with the capsid protein VP3. Functionally, localizes the viral replication complex to the surface of membranous vesicles. It inhibits host cell endoplasmic reticulum-to-Golgi apparatus transport and causes the disassembly of the Golgi complex, possibly through GBF1 interaction. This would result in depletion of MHC, trail receptors and IFN receptors at the host cell surface. Plays an essential role in viral RNA replication by recruiting ACBD3 and PI4KB at the viral replication sites, thereby allowing the formation of the rearranged membranous structures where viral replication takes place. In terms of biological role, acts as a primer for viral RNA replication and remains covalently bound to viral genomic RNA. VPg is uridylylated prior to priming replication into VPg-pUpU. The VPg-pUpU is then used as primer on the genomic RNA poly(A) by the RNA-dependent RNA polymerase to replicate the viral genome. Following genome release from the infecting virion in the cytoplasm, the VPg-RNA linkage is probably removed by host TDP2. During the late stage of the replication cycle, host TDP2 is excluded from sites of viral RNA synthesis and encapsidation, allowing for the generation of progeny virions. Cysteine protease that generates mature viral proteins from the precursor polyprotein. In addition to its proteolytic activity, it binds to viral RNA, and thus influences viral genome replication. RNA and substrate bind cooperatively to the protease. Its function is as follows. Replicates the viral genomic RNA on the surface of intracellular membranes. Covalently attaches UMP to a tyrosine of VPg, which is used to prime RNA synthesis. The positive stranded RNA genome is first replicated at virus induced membranous vesicles, creating a dsRNA genomic replication form. This dsRNA is then used as template to synthesize positive stranded RNA genomes. ss(+)RNA genomes are either translated, replicated or encapsidated. In Ljunganvirus 1 (LV), this protein is Genome polyprotein.